A 206-amino-acid polypeptide reads, in one-letter code: Large ribosomal subunit protein uL4 (206 aa).

Residues 45-76 (RQGNQSAKTRAEVSGGGKKPWRQKGTGRARQG) are disordered.

This sequence belongs to the universal ribosomal protein uL4 family. As to quaternary structure, part of the 50S ribosomal subunit.

In terms of biological role, one of the primary rRNA binding proteins, this protein initially binds near the 5'-end of the 23S rRNA. It is important during the early stages of 50S assembly. It makes multiple contacts with different domains of the 23S rRNA in the assembled 50S subunit and ribosome. Forms part of the polypeptide exit tunnel. This Clostridium novyi (strain NT) protein is Large ribosomal subunit protein uL4.